Consider the following 131-residue polypeptide: DCLPGWSSHEGHCYKVFNLAKTWEDAEKFCTEQANSGHLVSIDSKKEANFVAELVSQNIKETRRTDFVWIGLRVEDKRQHCSSEWSDGSSINYQNWIEAESKKCLGLEKQTRYRKWVNLNCGQPYRFTCEI.

Intrachain disulfides connect Cys2-Cys13, Cys30-Cys129, and Cys104-Cys121. One can recognise a C-type lectin domain in the interval 9-130 (HEGHCYKVFN…CGQPYRFTCE (122 aa)).

It belongs to the snaclec family. Heterodimer; disulfide-linked. In terms of tissue distribution, expressed by the venom gland.

It localises to the secreted. Interferes with one step of hemostasis (modulation of platelet aggregation, or coagulation cascade, for example). The chain is Snaclec A8 from Macrovipera lebetinus (Levantine viper).